Reading from the N-terminus, the 111-residue chain is UPF0342 protein SAG1376 (111 aa).

Over residues 52-63 the composition is skewed to polar residues; the sequence is QEMMQSGQMPSQ. The interval 52 to 71 is disordered; it reads QEMMQSGQMPSQEEQDEMSK.

Belongs to the UPF0342 family.

This is UPF0342 protein SAG1376 from Streptococcus agalactiae serotype V (strain ATCC BAA-611 / 2603 V/R).